The sequence spans 277 residues: uncharacterized protein (277 aa).

A disordered region spans residues H256–S277.

Its function is as follows. This protein may be involved in virus assembly. Essential for virus function. This is an uncharacterized protein from Saccharolobus solfataricus (Sulfolobus solfataricus).